The chain runs to 292 residues: Acetylglutamate kinase (292 aa).

Substrate contacts are provided by residues 64–65 (GG), arginine 86, and asparagine 190.

This sequence belongs to the acetylglutamate kinase family. ArgB subfamily.

It is found in the cytoplasm. It catalyses the reaction N-acetyl-L-glutamate + ATP = N-acetyl-L-glutamyl 5-phosphate + ADP. The protein operates within amino-acid biosynthesis; L-arginine biosynthesis; N(2)-acetyl-L-ornithine from L-glutamate: step 2/4. Catalyzes the ATP-dependent phosphorylation of N-acetyl-L-glutamate. This Pelobacter propionicus (strain DSM 2379 / NBRC 103807 / OttBd1) protein is Acetylglutamate kinase.